A 306-amino-acid polypeptide reads, in one-letter code: Arginase (306 aa).

Positions 96, 123, 125, and 127 each coordinate Mn(2+). Substrate is bound by residues 125 to 129, 136 to 138, and D178; these read HTDFH and SGN. The Mn(2+) site is built by D226 and D228. Substrate is bound by residues T240 and E271.

This sequence belongs to the arginase family. The cofactor is Mn(2+).

The enzyme catalyses L-arginine + H2O = urea + L-ornithine. It participates in nitrogen metabolism; urea cycle; L-ornithine and urea from L-arginine: step 1/1. This chain is Arginase (arcB), found in Brucella abortus biovar 1 (strain 9-941).